A 323-amino-acid polypeptide reads, in one-letter code: Fructose-bisphosphate aldolase (323 aa).

A beta-D-fructose 1,6-bisphosphate-binding site is contributed by S50. The active-site Proton donor is D83. Zn(2+)-binding residues include H84 and H178. Positions 178, 179, and 182 each coordinate beta-D-fructose 1,6-bisphosphate. Residue H210 participates in Zn(2+) binding. The beta-D-fructose 1,6-bisphosphate site is built by G211, S213, N253, D255, S256, R259, and R280.

It belongs to the class II fructose-bisphosphate aldolase family. As to quaternary structure, homodimer. It depends on Zn(2+) as a cofactor.

It carries out the reaction beta-D-fructose 1,6-bisphosphate = D-glyceraldehyde 3-phosphate + dihydroxyacetone phosphate. It participates in carbohydrate degradation; glycolysis; D-glyceraldehyde 3-phosphate and glycerone phosphate from D-glucose: step 4/4. Its function is as follows. Plays a key role in glycolysis by catalyzing the cleavage of fructose 1,6-bisphosphate into dihydroxyacetone phosphate and glyceraldehyde 3-phosphate. Does not cleave D-tagatose-1,6-bisphosphate. The chain is Fructose-bisphosphate aldolase from Giardia intestinalis (strain ATCC 50803 / WB clone C6) (Giardia lamblia).